The chain runs to 33 residues: Pardaxin P-2 (33 aa).

This sequence belongs to the pardaxin family. In aqueous solution exists as a tetramer.

It is found in the secreted. It localises to the target cell membrane. In terms of biological role, exhibits unusual shark repellent and surfactant properties. Forms voltage-dependent, ion-permeable channels in membranes. At high concentration causes cell membrane lysis. This chain is Pardaxin P-2, found in Pardachirus pavoninus (Peacock sole).